The primary structure comprises 20 residues: GKPNRPRPAPIQPRPPHPRL.

The disordered stretch occupies residues 1-20 (GKPNRPRPAPIQPRPPHPRL).

Belongs to the apidaecin family.

The protein resides in the secreted. Its function is as follows. Antimicrobial peptide active against many Gram-negative enterobacterial and plant-associated bacterial species. Not active against other bacterial species like H.pylori, P.mirabilis, B.pertussis or N.gonorrhoeae. Functionally, among others, also active against C.jejuni and L.pneumophila but not against Y.enterocolitica. In terms of biological role, among others, also active against Y.enterocolitica butnot against L.pneumophila and C.jejuni. The polypeptide is Apidaecin 1+ (Pimpla disparis (Parasitic wasp)).